The chain runs to 321 residues: Methionyl-tRNA formyltransferase (321 aa).

113-116 is a (6S)-5,6,7,8-tetrahydrofolate binding site; the sequence is SILP.

The protein belongs to the Fmt family.

It carries out the reaction L-methionyl-tRNA(fMet) + (6R)-10-formyltetrahydrofolate = N-formyl-L-methionyl-tRNA(fMet) + (6S)-5,6,7,8-tetrahydrofolate + H(+). Attaches a formyl group to the free amino group of methionyl-tRNA(fMet). The formyl group appears to play a dual role in the initiator identity of N-formylmethionyl-tRNA by promoting its recognition by IF2 and preventing the misappropriation of this tRNA by the elongation apparatus. This Vibrio atlanticus (strain LGP32) (Vibrio splendidus (strain Mel32)) protein is Methionyl-tRNA formyltransferase.